A 228-amino-acid chain; its full sequence is MRIDIVSIFPEFFGVLDISLLGRARQSGLIDLRLHDLRAFTHDRHRTVDDTPYGGGAGMVMRPEPWGEAMDEVLADDTDPVVIFPSPAGEVFTQAMAQELSAEPHLAFGCGRYEGIDQRVVDHTATRARVRLVSLGDYVLNGGEVAVMAMIEAIGRLVPGVVGNPASLVEESHSDGLLEHPSYTKPPEWRGLAVPDVLRSGNHGAIAAWRREQQLERTRRVRPDLLPD.

S-adenosyl-L-methionine contacts are provided by residues Gly-111 and 135 to 140; that span reads LGDYVL.

Belongs to the RNA methyltransferase TrmD family. As to quaternary structure, homodimer.

Its subcellular location is the cytoplasm. It carries out the reaction guanosine(37) in tRNA + S-adenosyl-L-methionine = N(1)-methylguanosine(37) in tRNA + S-adenosyl-L-homocysteine + H(+). Functionally, specifically methylates guanosine-37 in various tRNAs. In Clavibacter sepedonicus (Clavibacter michiganensis subsp. sepedonicus), this protein is tRNA (guanine-N(1)-)-methyltransferase.